The following is a 478-amino-acid chain: Transposase for insertion sequence element IS231C (478 aa).

The protein belongs to the transposase 11 family.

Involved in the transposition of the insertion sequence. The chain is Transposase for insertion sequence element IS231C from Bacillus thuringiensis subsp. berliner.